The primary structure comprises 345 residues: Probable fructokinase-3 (345 aa).

Belongs to the carbohydrate kinase PfkB family.

It catalyses the reaction D-fructose + ATP = D-fructose 6-phosphate + ADP + H(+). It participates in glycan biosynthesis; starch biosynthesis. In terms of biological role, may play an important role in maintaining the flux of carbon towards starch formation. This is Probable fructokinase-3 from Arabidopsis thaliana (Mouse-ear cress).